A 425-amino-acid chain; its full sequence is Glucose-6-phosphate 1-dehydrogenase (425 aa).

NADP(+) contacts are provided by Arg-44 and Lys-135. The substrate site is built by His-165, Lys-169, Glu-201, and Asp-220. The active-site Proton acceptor is the His-225. Lys-311 serves as a coordination point for substrate.

It belongs to the glucose-6-phosphate dehydrogenase family.

It catalyses the reaction D-glucose 6-phosphate + NADP(+) = 6-phospho-D-glucono-1,5-lactone + NADPH + H(+). Its pathway is carbohydrate degradation; pentose phosphate pathway; D-ribulose 5-phosphate from D-glucose 6-phosphate (oxidative stage): step 1/3. In terms of biological role, catalyzes the oxidation of glucose 6-phosphate to 6-phosphogluconolactone. The polypeptide is Glucose-6-phosphate 1-dehydrogenase (Helicobacter pylori (strain J99 / ATCC 700824) (Campylobacter pylori J99)).